A 218-amino-acid chain; its full sequence is Elongation factor Ts (218 aa).

Positions threonine 82–valine 85 are involved in Mg(2+) ion dislocation from EF-Tu.

This sequence belongs to the EF-Ts family.

It is found in the cytoplasm. Its function is as follows. Associates with the EF-Tu.GDP complex and induces the exchange of GDP to GTP. It remains bound to the aminoacyl-tRNA.EF-Tu.GTP complex up to the GTP hydrolysis stage on the ribosome. The polypeptide is Elongation factor Ts (Prochlorococcus marinus (strain MIT 9301)).